Here is a 453-residue protein sequence, read N- to C-terminus: Major fimbrium subunit FimC (453 aa).

A signal peptide spans 1–28 (MKMKYFHHPSGLLPRLLLLLLLTMGAVA). A lipid anchor (N-palmitoyl cysteine) is attached at Cys-29. Residue Cys-29 is the site of S-diacylglycerol cysteine attachment. The propeptide occupies 29 to 56 (CTKEDNPDQPTSDEVATVKMSLDDVEMR).

It belongs to the bacteroidetes fimbrillin superfamily. FimA/Mfa1 family. Fimbriae are composed of a major, structural subunit and the minor components FimC, FimD and FimE. Identified in a complex composed of FimC, FimD and FimE (in vitro). The complex interacts with host extracellular matrix proteins, including fibronectin and type I collagen. Interacts with host CXCR4.

The protein resides in the fimbrium. Its subcellular location is the cell outer membrane. Functionally, minor component of fimbriae. These long, filamentous pili are attached to the cell surface; they mediate biofilm formation, adhesion onto host cells and onto other bacteria that are part of the oral microbiome. They play an important role in invasion of periodontal tissues and are major virulence factors. FimC, FimD and FimE contribute to interaction with host CXCR4 and thereby down-regulate the TLR2-mediated host immune response. The polypeptide is Major fimbrium subunit FimC (Porphyromonas gingivalis (strain ATCC 33277 / DSM 20709 / CIP 103683 / JCM 12257 / NCTC 11834 / 2561)).